A 496-amino-acid polypeptide reads, in one-letter code: Glutathione reductase, cytosolic (496 aa).

Residues Ser32, Gly33, Glu52, Thr69, Cys70, and Lys78 each coordinate FAD. Glutathione is bound at residue Ser32. Cysteines 70 and 75 form a disulfide. Tyr127 contacts glutathione. Gly143 contacts FAD. 6 residues coordinate NADP(+): Gly208, Ile211, Glu214, Arg231, Arg237, and Gly294. FAD contacts are provided by Asp335 and Thr343. Ala373 serves as a coordination point for NADP(+). An FAD-binding site is contributed by His469. The Proton acceptor role is filled by His469.

This sequence belongs to the class-I pyridine nucleotide-disulfide oxidoreductase family. In terms of assembly, homodimer. FAD serves as cofactor.

Its subcellular location is the cytoplasm. The enzyme catalyses 2 glutathione + NADP(+) = glutathione disulfide + NADPH + H(+). Catalyzes the reduction of glutathione disulfide (GSSG) to reduced glutathione (GSH). Constitutes the major mechanism to maintain a high GSH:GSSG ratio in the cytosol. The sequence is that of Glutathione reductase, cytosolic (GRC2) from Oryza sativa subsp. japonica (Rice).